Consider the following 930-residue polypeptide: Nonribosomal peptide synthetase acyN (930 aa).

The segment at 15 to 436 (LDPQDNKISV…AGRAKETIIV (422 aa)) is adenylation (A) domain. The Carrier domain occupies 567–646 (APSNETEATI…GLAGTLETLM (80 aa)). Position 604 is an O-(pantetheine 4'-phosphoryl)serine (S604). The thioesterase (TE) domain stretch occupies residues 665-914 (PLWLVHPGVG…HYTMLGPDNI (250 aa)).

The protein belongs to the NRP synthetase family.

It catalyses the reaction 2 3-phenylpyruvate + 2 ATP = polyporic acid + 2 AMP + 2 diphosphate + H(+). Its pathway is secondary metabolite biosynthesis. Hydroxyphenylpyruvate acts more like a competitive inhibitor rather than a substrate. Nonribosomal peptide synthetase that mediates the biosynthesis of polyporic acid via the condensation of 2 phenylpyruvate units. Polyporic acid is further hydroxylaed by the cytochrome P450 monooxygenase MO6277 into less toxic ascocorynin. The chain is Nonribosomal peptide synthetase acyN from Ascocoryne sarcoides (Purple jellydisc fungus).